The sequence spans 769 residues: Calcium up-regulated protein B (769 aa).

The interval 1-22 is disordered; the sequence is MINIEDISKSSNQSEEKQLKST. 2 consecutive Ricin B-type lectin domains span residues 25–145 and 158–296; these read KPKY…WTTF and FQSK…WITN.

The protein belongs to the cup family.

It localises to the cytoplasm. The protein resides in the membrane. May play an important role in stabilizing and/or regulating the cell membrane during Ca(2+) stress or certain stages of development. This Dictyostelium discoideum (Social amoeba) protein is Calcium up-regulated protein B (cupB).